The sequence spans 241 residues: Probable transcriptional regulatory protein Mpe_A1337 (241 aa).

The tract at residues 1–20 (MAGHSKWANIQHRKGRQDEK) is disordered.

The protein belongs to the TACO1 family.

Its subcellular location is the cytoplasm. The polypeptide is Probable transcriptional regulatory protein Mpe_A1337 (Methylibium petroleiphilum (strain ATCC BAA-1232 / LMG 22953 / PM1)).